The sequence spans 243 residues: Biosynthetic peptidoglycan transglycosylase (243 aa).

A helical membrane pass occupies residues 21–43; sequence LLIVSLVSALMSVLQVIVFRFVD.

It belongs to the glycosyltransferase 51 family.

The protein resides in the cell inner membrane. The enzyme catalyses [GlcNAc-(1-&gt;4)-Mur2Ac(oyl-L-Ala-gamma-D-Glu-L-Lys-D-Ala-D-Ala)](n)-di-trans,octa-cis-undecaprenyl diphosphate + beta-D-GlcNAc-(1-&gt;4)-Mur2Ac(oyl-L-Ala-gamma-D-Glu-L-Lys-D-Ala-D-Ala)-di-trans,octa-cis-undecaprenyl diphosphate = [GlcNAc-(1-&gt;4)-Mur2Ac(oyl-L-Ala-gamma-D-Glu-L-Lys-D-Ala-D-Ala)](n+1)-di-trans,octa-cis-undecaprenyl diphosphate + di-trans,octa-cis-undecaprenyl diphosphate + H(+). The protein operates within cell wall biogenesis; peptidoglycan biosynthesis. Its function is as follows. Peptidoglycan polymerase that catalyzes glycan chain elongation from lipid-linked precursors. This chain is Biosynthetic peptidoglycan transglycosylase, found in Xylella fastidiosa (strain M12).